We begin with the raw amino-acid sequence, 309 residues long: Carbonic anhydrase 4 (309 aa).

A signal peptide spans 1–17 (MQLLLALLALAYVAPST). Residues 20-282 (SHWCYEIQAK…LGNRQVFRSH (263 aa)) form the Alpha-carbonic anhydrase domain. Intrachain disulfides connect cysteine 23-cysteine 35 and cysteine 45-cysteine 226. Histidine 87 functions as the Proton donor/acceptor in the catalytic mechanism. Residues histidine 114, histidine 116, and histidine 139 each coordinate Zn(2+). Asparagine 193 carries an N-linked (GlcNAc...) asparagine glycan. 222–223 (TT) is a substrate binding site. Serine 281 carries GPI-anchor amidated serine lipidation. The propeptide at 282–309 (HASGRLLSLPLPTLLVPTLTCLVASFLH) is removed in mature form.

This sequence belongs to the alpha-carbonic anhydrase family. Interacts with SLC4A4. The cofactor is Zn(2+). Post-translationally, the N-terminus is blocked. In terms of processing, glycosylated. Present in kidney and lung. Also particularly abundant in brain, muscle, heart and liver. Not detected in skin or spleen.

It is found in the cell membrane. It catalyses the reaction hydrogencarbonate + H(+) = CO2 + H2O. Its activity is regulated as follows. Inhibited by acetazolamide. Its function is as follows. Catalyzes the reversible hydration of carbon dioxide into bicarbonate and protons and thus is essential to maintaining intracellular and extracellular pH. May stimulate the sodium/bicarbonate transporter activity of SLC4A4 that acts in pH homeostasis. It is essential for acid overload removal from the retina and retina epithelium, and acid release in the choriocapillaris in the choroid. The chain is Carbonic anhydrase 4 (Ca4) from Rattus norvegicus (Rat).